A 429-amino-acid chain; its full sequence is Glutamate-1-semialdehyde 2,1-aminomutase (429 aa).

N6-(pyridoxal phosphate)lysine is present on Lys-265.

Belongs to the class-III pyridoxal-phosphate-dependent aminotransferase family. HemL subfamily. Homodimer. Pyridoxal 5'-phosphate serves as cofactor.

The protein localises to the cytoplasm. The catalysed reaction is (S)-4-amino-5-oxopentanoate = 5-aminolevulinate. It functions in the pathway porphyrin-containing compound metabolism; protoporphyrin-IX biosynthesis; 5-aminolevulinate from L-glutamyl-tRNA(Glu): step 2/2. This Chromohalobacter salexigens (strain ATCC BAA-138 / DSM 3043 / CIP 106854 / NCIMB 13768 / 1H11) protein is Glutamate-1-semialdehyde 2,1-aminomutase.